The sequence spans 360 residues: Mannonate dehydratase (360 aa).

The protein belongs to the mannonate dehydratase family. The cofactor is Fe(2+). Mn(2+) is required as a cofactor.

The catalysed reaction is D-mannonate = 2-dehydro-3-deoxy-D-gluconate + H2O. The protein operates within carbohydrate metabolism; pentose and glucuronate interconversion. Catalyzes the dehydration of D-mannonate. The sequence is that of Mannonate dehydratase (uxuA) from Thermotoga neapolitana.